The chain runs to 429 residues: Glutamyl-tRNA reductase (429 aa).

Residues 56–59 (TCNR), serine 119, 124–126 (EPQ), and glutamine 130 each bind substrate. Cysteine 57 (nucleophile) is an active-site residue. 199–204 (GAGEMI) is an NADP(+) binding site.

It belongs to the glutamyl-tRNA reductase family. In terms of assembly, homodimer.

The enzyme catalyses (S)-4-amino-5-oxopentanoate + tRNA(Glu) + NADP(+) = L-glutamyl-tRNA(Glu) + NADPH + H(+). Its pathway is porphyrin-containing compound metabolism; protoporphyrin-IX biosynthesis; 5-aminolevulinate from L-glutamyl-tRNA(Glu): step 1/2. In terms of biological role, catalyzes the NADPH-dependent reduction of glutamyl-tRNA(Glu) to glutamate 1-semialdehyde (GSA). The sequence is that of Glutamyl-tRNA reductase from Janthinobacterium sp. (strain Marseille) (Minibacterium massiliensis).